The following is a 198-amino-acid chain: ATP-dependent Clp protease proteolytic subunit (198 aa).

Residue Ser103 is the Nucleophile of the active site. His128 is an active-site residue.

The protein belongs to the peptidase S14 family. As to quaternary structure, fourteen ClpP subunits assemble into 2 heptameric rings which stack back to back to give a disk-like structure with a central cavity, resembling the structure of eukaryotic proteasomes.

The protein localises to the cytoplasm. The catalysed reaction is Hydrolysis of proteins to small peptides in the presence of ATP and magnesium. alpha-casein is the usual test substrate. In the absence of ATP, only oligopeptides shorter than five residues are hydrolyzed (such as succinyl-Leu-Tyr-|-NHMec, and Leu-Tyr-Leu-|-Tyr-Trp, in which cleavage of the -Tyr-|-Leu- and -Tyr-|-Trp bonds also occurs).. Functionally, cleaves peptides in various proteins in a process that requires ATP hydrolysis. Has a chymotrypsin-like activity. Plays a major role in the degradation of misfolded proteins. This chain is ATP-dependent Clp protease proteolytic subunit, found in Vesicomyosocius okutanii subsp. Calyptogena okutanii (strain HA).